We begin with the raw amino-acid sequence, 1114 residues long: Translation initiation factor IF-2 (1114 aa).

2 disordered regions span residues 69-102 and 181-507; these read SIKKDNFKQNKSPSISSKKETPLKDNSNKKPLLI and INNN…KRRA. Basic and acidic residues predominate over residues 85–96; the sequence is SKKETPLKDNSN. A compositionally biased stretch (polar residues) spans 181 to 198; sequence INNNVKSNESSQNISSAG. Low complexity predominate over residues 240-251; it reads INPNKQNNKQNI. A compositionally biased stretch (polar residues) spans 252 to 261; it reads AFKQTGSNRI. Low complexity-rich tracts occupy residues 262 to 278, 290 to 309, and 321 to 337; these read GSPNRPGMPNNRPGLRN, NRQGNPNRPGMPNNRPGLRN, and NRQGNPNRPGMPNNRPG. Over residues 365-375 the composition is skewed to basic and acidic residues; it reads NSEKDNKDKNN. The span at 376 to 385 shows a compositional bias: low complexity; it reads NAKQNINGPN. Over residues 417–431 the composition is skewed to basic and acidic residues; sequence GKTDWDDSAKLEALR. Residues 489-505 are compositionally biased toward basic residues; sequence KQFKKKKKETTRQRQKR. The region spanning 606–778 is the tr-type G domain; sequence RRPPVITVMG…ILLVSEVEDL (173 aa). The interval 615 to 622 is G1; that stretch reads GHVDHGKT. Residue 615–622 coordinates GTP; sequence GHVDHGKT. The tract at residues 640-644 is G2; that stretch reads GITQH. The G3 stretch occupies residues 665-668; sequence DTPG. Residues 665–669 and 719–722 each bind GTP; these read DTPGH and NKID. Residues 719 to 722 form a G4 region; it reads NKID. Residues 755–757 are G5; sequence SAI.

The protein belongs to the TRAFAC class translation factor GTPase superfamily. Classic translation factor GTPase family. IF-2 subfamily.

The protein resides in the cytoplasm. One of the essential components for the initiation of protein synthesis. Protects formylmethionyl-tRNA from spontaneous hydrolysis and promotes its binding to the 30S ribosomal subunits. Also involved in the hydrolysis of GTP during the formation of the 70S ribosomal complex. This Prochlorococcus marinus (strain MIT 9301) protein is Translation initiation factor IF-2.